The following is a 461-amino-acid chain: MLDDTIVAIATALGEGSIGVIRMSGPDAITIGKKVFRPKYNKEWYQKDNYKIIYGHVINPETGEIIDEVLLSIMRGPKSFTAEDVIEISCHGGIIPLRKVLEVILRNGARHAEPGEFSKRSFLNGRLDLAQAESIIDIIRAKTDAGAKIAVNQLGGKLSEKVNGLQHKVLGLLAKIEAIIDFPEDDIPEENLLGISKECNSLIKEIEHLLAYADTGKIYREGLKTVIVGKPNVGKSSLLNALLHEQRAIVTDIPGTTRDVIEEILSIKGVPLKIIDTAGLRETQDLVEKIGVEKSRELLNQADIVLFVLDATTGISDEDRKVIDLIKDKKVLILINKIDITKNKIDSHEIRQLINFSEIIEISAQKEIGLDKLEETIFNMVVEGKITTTDSIFVSNSRHKHALERAMQHLLEASKGLQEYVPADLVSIDLKSSWEILGEITGNSVTEDLIDRIFSDFCIGK.

3 residues coordinate (6S)-5-formyl-5,6,7,8-tetrahydrofolate: R22, E87, and R126. Residues 222–382 (GLKTVIVGKP…LEETIFNMVV (161 aa)) enclose the TrmE-type G domain. Position 232 (N232) interacts with K(+). Residues 232–237 (NVGKSS), 251–257 (TDIPGTT), and 276–279 (DTAG) each bind GTP. S236 is a Mg(2+) binding site. K(+) is bound by residues T251, I253, and T256. A Mg(2+)-binding site is contributed by T257. (6S)-5-formyl-5,6,7,8-tetrahydrofolate is bound at residue K461.

This sequence belongs to the TRAFAC class TrmE-Era-EngA-EngB-Septin-like GTPase superfamily. TrmE GTPase family. As to quaternary structure, homodimer. Heterotetramer of two MnmE and two MnmG subunits. It depends on K(+) as a cofactor.

Its subcellular location is the cytoplasm. Its function is as follows. Exhibits a very high intrinsic GTPase hydrolysis rate. Involved in the addition of a carboxymethylaminomethyl (cmnm) group at the wobble position (U34) of certain tRNAs, forming tRNA-cmnm(5)s(2)U34. This is tRNA modification GTPase MnmE from Desulforamulus reducens (strain ATCC BAA-1160 / DSM 100696 / MI-1) (Desulfotomaculum reducens).